The following is a 48-amino-acid chain: Protein YodE (48 aa).

The protein is Protein YodE of Escherichia coli (strain K12).